Here is a 207-residue protein sequence, read N- to C-terminus: LexA repressor (207 aa).

Residues 28-48 (RAEIARRLGFKSPNAAEEHLK) constitute a DNA-binding region (H-T-H motif). Catalysis depends on for autocatalytic cleavage activity residues Ser126 and Lys163.

The protein belongs to the peptidase S24 family. As to quaternary structure, homodimer.

The catalysed reaction is Hydrolysis of Ala-|-Gly bond in repressor LexA.. Represses a number of genes involved in the response to DNA damage (SOS response), including recA and lexA. In the presence of single-stranded DNA, RecA interacts with LexA causing an autocatalytic cleavage which disrupts the DNA-binding part of LexA, leading to derepression of the SOS regulon and eventually DNA repair. This chain is LexA repressor, found in Marinomonas sp. (strain MWYL1).